The sequence spans 288 residues: Glutamate racemase (288 aa).

The interval 1-21 (MAIARQDVNISSPEATTSDAQ) is disordered. A compositionally biased stretch (polar residues) spans 8–21 (VNISSPEATTSDAQ). Residues 32 to 33 (DS) and 64 to 65 (YG) each bind substrate. The Proton donor/acceptor role is filled by C96. Residue 97–98 (NT) participates in substrate binding. C209 acts as the Proton donor/acceptor in catalysis. 210-211 (TH) serves as a coordination point for substrate.

It belongs to the aspartate/glutamate racemases family.

The catalysed reaction is L-glutamate = D-glutamate. Its pathway is cell wall biogenesis; peptidoglycan biosynthesis. Its function is as follows. Provides the (R)-glutamate required for cell wall biosynthesis. The protein is Glutamate racemase of Proteus mirabilis (strain HI4320).